Here is a 76-residue protein sequence, read N- to C-terminus: Sec-independent protein translocase protein TatA (76 aa).

Residues 1–21 (MGGLSIWHWLIVLLIVALVFG) form a helical membrane-spanning segment. Residues 43–76 (MKDGDAPADAQQLPRSGTVDVNAKEATRSDSNKA) are disordered. Positions 64–76 (NAKEATRSDSNKA) are enriched in basic and acidic residues.

It belongs to the TatA/E family. In terms of assembly, the Tat system comprises two distinct complexes: a TatABC complex, containing multiple copies of TatA, TatB and TatC subunits, and a separate TatA complex, containing only TatA subunits. Substrates initially bind to the TatABC complex, which probably triggers association of the separate TatA complex to form the active translocon.

Its subcellular location is the cell inner membrane. In terms of biological role, part of the twin-arginine translocation (Tat) system that transports large folded proteins containing a characteristic twin-arginine motif in their signal peptide across membranes. TatA could form the protein-conducting channel of the Tat system. The sequence is that of Sec-independent protein translocase protein TatA from Burkholderia multivorans (strain ATCC 17616 / 249).